A 414-amino-acid chain; its full sequence is Protein FAM81B (414 aa).

The segment covering 1 to 13 (MTSETDINKSASP) has biased composition (polar residues). The tract at residues 1–43 (MTSETDINKSASPTAAAKEQPEEPDGPLPGSASEQEKKVRFSP) is disordered. Coiled-coil stretches lie at residues 70-94 (NTQR…LEQA), 121-149 (LLEN…QIKA), 188-223 (KLSG…NLDT), and 266-414 (LNLY…LQES).

It belongs to the FAM81 family.

This Bos taurus (Bovine) protein is Protein FAM81B (FAM81B).